The sequence spans 528 residues: GMP synthase [glutamine-hydrolyzing] (528 aa).

One can recognise a Glutamine amidotransferase type-1 domain in the interval 13–204 (SILILDFGSQ…VYSISKCKAD (192 aa)). Cysteine 90 (nucleophile) is an active-site residue. Active-site residues include histidine 178 and glutamate 180. In terms of domain architecture, GMPS ATP-PPase spans 205 to 403 (WNTETFLEET…LGLPDEIIKR (199 aa)). 232–238 (SGGVDSS) is a binding site for ATP.

As to quaternary structure, homodimer.

It carries out the reaction XMP + L-glutamine + ATP + H2O = GMP + L-glutamate + AMP + diphosphate + 2 H(+). The protein operates within purine metabolism; GMP biosynthesis; GMP from XMP (L-Gln route): step 1/1. In terms of biological role, catalyzes the synthesis of GMP from XMP. The sequence is that of GMP synthase [glutamine-hydrolyzing] from Prochlorococcus marinus (strain MIT 9515).